The following is a 123-amino-acid chain: Fluoride-specific ion channel FluC 2 (123 aa).

A run of 4 helical transmembrane segments spans residues 3–23, 38–58, 62–82, and 94–114; these read LDGF…RMFI, ILIV…LNIT, LILF…SFIY, and LILL…FCLG. The Na(+) site is built by G72 and S75.

The protein belongs to the fluoride channel Fluc/FEX (TC 1.A.43) family.

The protein localises to the cell inner membrane. It catalyses the reaction fluoride(in) = fluoride(out). Its activity is regulated as follows. Na(+) is not transported, but it plays an essential structural role and its presence is essential for fluoride channel function. Fluoride-specific ion channel. Important for reducing fluoride concentration in the cell, thus reducing its toxicity. The sequence is that of Fluoride-specific ion channel FluC 2 from Prochlorococcus marinus subsp. pastoris (strain CCMP1986 / NIES-2087 / MED4).